We begin with the raw amino-acid sequence, 547 residues long: Malolactic enzyme (547 aa).

Tyrosine 92 (proton donor) is an active-site residue. Lysine 165 acts as the Proton acceptor in catalysis. Position 165 (lysine 165) interacts with substrate. Residues glutamate 236, aspartate 237, and aspartate 260 each contribute to the Mn(2+) site. NAD(+)-binding positions include alanine 293 to alanine 296, asparagine 405, and asparagine 450. Substrate is bound at residue asparagine 450.

Belongs to the malic enzymes family. Homodimer. Mn(2+) serves as cofactor. Requires NAD(+) as cofactor.

It catalyses the reaction (S)-malate + H(+) = (S)-lactate + CO2. Its function is as follows. Involved in the malolactic fermentation (MLF) of wine, which results in a natural decrease in acidity and favorable changes in wine flavors. Catalyzes the decarboxylation of L-malate to L-lactate. This Lactiplantibacillus plantarum (strain ATCC BAA-793 / NCIMB 8826 / WCFS1) (Lactobacillus plantarum) protein is Malolactic enzyme.